Consider the following 340-residue polypeptide: Zinc finger protein 367 (340 aa).

Positions 101 to 140 are disordered; it reads GAPQSSASVAAVSGGEDEEEASSPDSGHLKDGIRRGRPRA. Basic and acidic residues predominate over residues 127–140; it reads GHLKDGIRRGRPRA. 2 C2H2-type zinc fingers span residues 157 to 179 and 185 to 209; these read IRCNICNRVFPREKSLQAHKRTH and YLCDYPDCGKAFVQSGQLKTHQRLH. Residues 280–317 form a disordered region; sequence KGKLVQKADQEQQDPLEYLQSDEEDDEKSGAQRRLQEQ. Positions 299-332 form a coiled coil; the sequence is QSDEEDDEKSGAQRRLQEQRERLHGALALIELAN. Residue Ser-300 is modified to Phosphoserine. Positions 307–317 are enriched in basic and acidic residues; it reads KSGAQRRLQEQ.

It belongs to the krueppel C2H2-type zinc-finger protein family. Expressed in bone marrow and ovary.

It localises to the nucleus. In terms of biological role, transcriptional activator. Isoform 1 may be involved in transcriptional activation of erythroid genes. This is Zinc finger protein 367 (Znf367) from Mus musculus (Mouse).